Reading from the N-terminus, the 296-residue chain is Diaminopimelate epimerase (296 aa).

Residues Asn-17, Gln-49, and Asn-69 each coordinate substrate. Cys-78 (proton donor) is an active-site residue. Residues 79–80 (GN), Asn-171, Asn-205, and 223–224 (ER) contribute to the substrate site. Cys-232 (proton acceptor) is an active-site residue. 233–234 (GT) contacts substrate.

This sequence belongs to the diaminopimelate epimerase family. Homodimer.

It is found in the cytoplasm. It catalyses the reaction (2S,6S)-2,6-diaminopimelate = meso-2,6-diaminopimelate. The protein operates within amino-acid biosynthesis; L-lysine biosynthesis via DAP pathway; DL-2,6-diaminopimelate from LL-2,6-diaminopimelate: step 1/1. Functionally, catalyzes the stereoinversion of LL-2,6-diaminopimelate (L,L-DAP) to meso-diaminopimelate (meso-DAP), a precursor of L-lysine and an essential component of the bacterial peptidoglycan. In Methylorubrum extorquens (strain CM4 / NCIMB 13688) (Methylobacterium extorquens), this protein is Diaminopimelate epimerase.